The chain runs to 576 residues: Carboxypeptidase S (576 aa).

The Cytoplasmic segment spans residues 1 to 19; that stretch reads MIALPVEKAPRKSLWQRHR. K8 participates in a covalent cross-link: Glycyl lysine isopeptide (Lys-Gly) (interchain with G-Cter in ubiquitin). Residues 20 to 40 form a helical membrane-spanning segment; the sequence is AFISGIVALIIIGTFFLTSGL. Topologically, residues 41-576 are lumenal; that stretch reads HPAPPHEAKR…EYIVNVNEYA (536 aa). Positions 44–65 are disordered; the sequence is PPHEAKRPHHGKGPMHSPKCEK. N-linked (GlcNAc...) asparagine glycosylation is present at N88. Residue H168 participates in Zn(2+) binding. The active site involves D170. N176 is a glycosylation site (N-linked (GlcNAc...) asparagine). D205 provides a ligand contact to Zn(2+). Residue N228 is glycosylated (N-linked (GlcNAc...) asparagine). The active-site Proton acceptor is the E239. Positions 240 and 268 each coordinate Zn(2+). N-linked (GlcNAc...) asparagine glycosylation is found at N381 and N525. H547 provides a ligand contact to Zn(2+).

This sequence belongs to the peptidase M20A family. As to quaternary structure, yscS is synthesized as one polypeptide chain precursor which after carbohydrate modification in the secretory pathway yields two active precursor molecules. The proteolytically unprocessed forms are associated with the membrane, whereas the mature forms of the enzyme are soluble. It depends on Zn(2+) as a cofactor. In terms of processing, glycosylated. Ubiquitinated. Ubiquitination mediates sorting into internal vesicles in late endosomes. TUL1 is required for ubiquitination.

It localises to the vacuole membrane. It catalyses the reaction Release of a C-terminal amino acid from a peptide in which glycine is the penultimate amino acid, e.g. Z-Gly-|-Leu.. Its function is as follows. Necessary for use of certain peptides as sole nitrogen source. May also cleave intracellularly generated peptides to recycle amino acids for protein synthesis. In Saccharomyces cerevisiae (strain ATCC 204508 / S288c) (Baker's yeast), this protein is Carboxypeptidase S (CPS1).